A 179-amino-acid chain; its full sequence is Large ribosomal subunit protein uL5 (179 aa).

This sequence belongs to the universal ribosomal protein uL5 family. As to quaternary structure, part of the 50S ribosomal subunit; part of the 5S rRNA/L5/L18/L25 subcomplex. Contacts the 5S rRNA and the P site tRNA. Forms a bridge to the 30S subunit in the 70S ribosome.

Functionally, this is one of the proteins that bind and probably mediate the attachment of the 5S RNA into the large ribosomal subunit, where it forms part of the central protuberance. In the 70S ribosome it contacts protein S13 of the 30S subunit (bridge B1b), connecting the 2 subunits; this bridge is implicated in subunit movement. Contacts the P site tRNA; the 5S rRNA and some of its associated proteins might help stabilize positioning of ribosome-bound tRNAs. In Ruthia magnifica subsp. Calyptogena magnifica, this protein is Large ribosomal subunit protein uL5.